Here is a 73-residue protein sequence, read N- to C-terminus: Putative antitoxin VapB9 (73 aa).

In terms of biological role, antitoxin component of a possible type II toxin-antitoxin (TA) system. The cognate toxin is VapC9. The sequence is that of Putative antitoxin VapB9 (vapB9) from Mycobacterium tuberculosis (strain CDC 1551 / Oshkosh).